Consider the following 487-residue polypeptide: 2-aminomuconic semialdehyde dehydrogenase (487 aa).

209–215 (GTGPRVG) is a binding site for NAD(+). Glutamate 253 serves as the catalytic Proton acceptor. The Nucleophile role is filled by cysteine 287. Position 362 is a phosphoserine (serine 362).

The protein belongs to the aldehyde dehydrogenase family. As to expression, highly expressed in adult kidney and liver. Detected at lower levels in fetal liver and kidney.

It localises to the cytoplasm. The catalysed reaction is 2-aminomuconate 6-semialdehyde + NAD(+) + H2O = (2Z,4E)-2-aminomuconate + NADH + 2 H(+). It functions in the pathway amino-acid degradation; L-kynurenine degradation. Catalyzes the NAD-dependent oxidation of 2-aminomuconic semialdehyde of the kynurenine metabolic pathway in L-tryptophan degradation. The protein is 2-aminomuconic semialdehyde dehydrogenase of Homo sapiens (Human).